A 149-amino-acid polypeptide reads, in one-letter code: MQVILLDKIGNLGGLGDQVNVKAGYARNFLIPQGKVVMATKANVEMFETRRAELEANVAKQLAAAEARAESVNALEVTIASKSGDEGKLFGSIGNRDIADAATAAGVAIAKSEVRLPEGALRTTGSFEVSIQLHSEVFATLKLEVVAAE.

It belongs to the bacterial ribosomal protein bL9 family.

Functionally, binds to the 23S rRNA. In Aliivibrio salmonicida (strain LFI1238) (Vibrio salmonicida (strain LFI1238)), this protein is Large ribosomal subunit protein bL9.